Here is a 315-residue protein sequence, read N- to C-terminus: Polyprenyl transferase mpaA (315 aa).

8 consecutive transmembrane segments (helical) span residues 40 to 60 (IEFI…LCGA), 84 to 103 (LASG…GQYF), 118 to 135 (IWSL…YPYL), 143 to 163 (VFVY…ITGW), 174 to 194 (GDII…CVYF), 224 to 244 (LFLA…ISTI), 248 to 268 (WLWV…IAQF), and 279 to 299 (IHWD…VEVG).

Belongs to the UbiA prenyltransferase family. Mg(2+) serves as cofactor.

It is found in the golgi apparatus membrane. The enzyme catalyses 5,7-dihydroxy-4-methylphthalide + (2E,6E)-farnesyl diphosphate = 4-farnesyl-3,5-dihydroxy-6-methylphthalide + diphosphate. It participates in secondary metabolite biosynthesis; terpenoid biosynthesis. Functionally, polyprenyl transferase; part of the gene cluster that mediates the biosynthesis of mycophenolic acid (MPA), the first isolated antibiotic natural product in the world obtained from a culture of Penicillium brevicompactum in 1893. MpaA is a Golgi apparatus-associated enzyme that catalyzes the prenylation of 5,7-dihydroxy-4,6-dimethylphthalide (DHMP) to yield farnesyl-DHMP (FDHMP). The first step of the pathway is the synthesis of 5-methylorsellinic acid (5MOA) by the cytosolic polyketide synthase mpaC. 5MOA is then converted to the phthalide compound 5,7-dihydroxy-4,6-dimethylphthalide (DHMP) by the endoplasmic reticulum-bound cytochrome P450 monooxygenase mpaDE. MpaDE first catalyzes hydroxylation of 5-MOA to 4,6-dihydroxy-2-(hydroxymethyl)-3-methylbenzoic acid (DHMB). MpaDE then acts as a lactone synthase that catalyzes the ring closure to convert DHMB into DHMP. The next step is the prenylation of DHMP by the Golgi apparatus-associated prenyltransferase mpaA to yield farnesyl-DHMP (FDHMP). The ER-bound oxygenase mpaB then mediates the oxidative cleavage the C19-C20 double bond in FDHMP to yield FDHMP-3C via a mycophenolic aldehyde intermediate. The O-methyltransferase mpaG catalyzes the methylation of FDHMP-3C to yield MFDHMP-3C. After the cytosolic methylation of FDHMP-3C, MFDHMP-3C enters into peroxisomes probably via free diffusion due to its low molecular weight. Upon a peroxisomal CoA ligation reaction, catalyzed by a beta-oxidation component enzyme acyl-CoA ligase ACL891, MFDHMP-3C-CoA would then be restricted to peroxisomes for the following beta-oxidation pathway steps. The peroxisomal beta-oxidation machinery than converts MFDHMP-3C-CoA into MPA_CoA, via a beta-oxidation chain-shortening process. Finally mpaH acts as a peroxisomal acyl-CoA hydrolase with high substrate specificity toward MPA-CoA to release the final product MPA. This Penicillium brevicompactum protein is Polyprenyl transferase mpaA.